A 365-amino-acid polypeptide reads, in one-letter code: Chorismate synthase (365 aa).

Residue Arg46 participates in NADP(+) binding. FMN contacts are provided by residues 123–125 (RSS), 241–242 (NG), Gly281, 296–300 (KPTPS), and Arg322.

The protein belongs to the chorismate synthase family. Homotetramer. FMNH2 is required as a cofactor.

The enzyme catalyses 5-O-(1-carboxyvinyl)-3-phosphoshikimate = chorismate + phosphate. It participates in metabolic intermediate biosynthesis; chorismate biosynthesis; chorismate from D-erythrose 4-phosphate and phosphoenolpyruvate: step 7/7. Catalyzes the anti-1,4-elimination of the C-3 phosphate and the C-6 proR hydrogen from 5-enolpyruvylshikimate-3-phosphate (EPSP) to yield chorismate, which is the branch point compound that serves as the starting substrate for the three terminal pathways of aromatic amino acid biosynthesis. This reaction introduces a second double bond into the aromatic ring system. The protein is Chorismate synthase of Helicobacter pylori (strain ATCC 700392 / 26695) (Campylobacter pylori).